Consider the following 720-residue polypeptide: Replication restart protein PriA (720 aa).

The Helicase ATP-binding domain maps to 200–366 (ILMKNCFTSW…LHKKCFYIKF (167 aa)). Residue 213–220 (KNNFYLKV) coordinates ATP. Positions 309-312 (NQEH) match the DEAH box motif. Cys-425, Cys-428, Cys-434, Cys-437, Cys-452, Cys-455, Cys-465, and Cys-468 together coordinate Zn(2+).

Belongs to the helicase family. PriA subfamily. Component of the replication restart primosome. Zn(2+) is required as a cofactor.

The catalysed reaction is Couples ATP hydrolysis with the unwinding of duplex DNA by translocating in the 3'-5' direction.. It carries out the reaction ATP + H2O = ADP + phosphate + H(+). Functionally, initiates the restart of stalled replication forks, which reloads the replicative helicase on sites other than the origin of replication. Recognizes and binds to abandoned replication forks and remodels them to uncover a helicase loading site. Promotes assembly of the primosome at these replication forks. The protein is Replication restart protein PriA of Buchnera aphidicola subsp. Schizaphis graminum (strain Sg).